A 102-amino-acid chain; its full sequence is Small ribosomal subunit protein uS10 (102 aa).

Belongs to the universal ribosomal protein uS10 family. As to quaternary structure, part of the 30S ribosomal subunit.

Its function is as follows. Involved in the binding of tRNA to the ribosomes. The chain is Small ribosomal subunit protein uS10 from Methylobacterium radiotolerans (strain ATCC 27329 / DSM 1819 / JCM 2831 / NBRC 15690 / NCIMB 10815 / 0-1).